A 239-amino-acid polypeptide reads, in one-letter code: Sugar fermentation stimulation protein homolog (239 aa).

The protein belongs to the SfsA family.

The protein is Sugar fermentation stimulation protein homolog of Maridesulfovibrio salexigens (strain ATCC 14822 / DSM 2638 / NCIMB 8403 / VKM B-1763) (Desulfovibrio salexigens).